Reading from the N-terminus, the 418-residue chain is MIFDKGNVEDFDKELWDAIHAEEERQEHHIELIASENMVSKAVMAAQGSVLTNKYAEGYPGNRYYGGTECVDIVETLAIERAKKLFGAAFANVQAHSGSQANAAAYMALIEAGDTVLGMDLAAGGHLTHGSPVNFSGKTYHFVGYSVDADTEMLNYEAILEQAKAVQPKLIVAGASAYSRNIDFEKFRAIADHVGAYLMVDMAHIAGLVAAGVHPSPVPYAHIVTSTTHKTLRGPRGGLILTNDEALAKKINSAVFPGLQGGPLEHVIAAKAVAFKEALDPAFKDYAQAIIDNTAAMAAVFAQDDRFRLISGGTDNHVFLVDVTKVIANGKLAQNLLDEVNITLNKNAIPFETLSPFNTSGIRIGCAAITSRGMGVKESQTIARLIIKALVNHDQETILEEVRQEVRQLTDAFPLYKK.

(6S)-5,6,7,8-tetrahydrofolate contacts are provided by residues Leu-121 and 125–127; that span reads GHL. Lys-230 is subject to N6-(pyridoxal phosphate)lysine. (6S)-5,6,7,8-tetrahydrofolate is bound at residue 355–357; it reads SPF.

The protein belongs to the SHMT family. Homodimer. Requires pyridoxal 5'-phosphate as cofactor.

Its subcellular location is the cytoplasm. It catalyses the reaction (6R)-5,10-methylene-5,6,7,8-tetrahydrofolate + glycine + H2O = (6S)-5,6,7,8-tetrahydrofolate + L-serine. It functions in the pathway one-carbon metabolism; tetrahydrofolate interconversion. It participates in amino-acid biosynthesis; glycine biosynthesis; glycine from L-serine: step 1/1. Catalyzes the reversible interconversion of serine and glycine with tetrahydrofolate (THF) serving as the one-carbon carrier. This reaction serves as the major source of one-carbon groups required for the biosynthesis of purines, thymidylate, methionine, and other important biomolecules. Also exhibits THF-independent aldolase activity toward beta-hydroxyamino acids, producing glycine and aldehydes, via a retro-aldol mechanism. This chain is Serine hydroxymethyltransferase, found in Streptococcus pyogenes serotype M3 (strain ATCC BAA-595 / MGAS315).